The primary structure comprises 446 residues: Tol-Pal system protein TolB (446 aa).

The N-terminal stretch at 1–19 (MLLRYLFILFIIIPIKAFA) is a signal peptide.

The protein belongs to the TolB family. The Tol-Pal system is composed of five core proteins: the inner membrane proteins TolA, TolQ and TolR, the periplasmic protein TolB and the outer membrane protein Pal. They form a network linking the inner and outer membranes and the peptidoglycan layer.

It is found in the periplasm. Part of the Tol-Pal system, which plays a role in outer membrane invagination during cell division and is important for maintaining outer membrane integrity. The sequence is that of Tol-Pal system protein TolB from Pelagibacter ubique (strain HTCC1062).